The following is a 353-amino-acid chain: DNA-directed RNA polymerase subunit alpha (353 aa).

The tract at residues 1-234 (MVREKVTVST…DLFIPFLHTE (234 aa)) is alpha N-terminal domain (alpha-NTD). Residues 267–353 (KRALKSIFID…LAQLIDSKSG (87 aa)) are alpha C-terminal domain (alpha-CTD).

The protein belongs to the RNA polymerase alpha chain family. As to quaternary structure, in plastids the minimal PEP RNA polymerase catalytic core is composed of four subunits: alpha, beta, beta', and beta''. When a (nuclear-encoded) sigma factor is associated with the core the holoenzyme is formed, which can initiate transcription.

The protein localises to the plastid. It localises to the chloroplast. The catalysed reaction is RNA(n) + a ribonucleoside 5'-triphosphate = RNA(n+1) + diphosphate. DNA-dependent RNA polymerase catalyzes the transcription of DNA into RNA using the four ribonucleoside triphosphates as substrates. This Daucus carota (Wild carrot) protein is DNA-directed RNA polymerase subunit alpha.